A 312-amino-acid chain; its full sequence is Acetyl-coenzyme A carboxylase carboxyl transferase subunit beta (312 aa).

In terms of domain architecture, CoA carboxyltransferase N-terminal spans 24 to 293; sequence LWIKCPDSGQ…VEHAKPAPQL (270 aa). The segment at 286 to 312 is disordered; sequence HAKPAPQLPPPAKPAETAEAPAVATSA. Residues 299 to 312 show a composition bias toward low complexity; it reads PAETAEAPAVATSA.

This sequence belongs to the AccD/PCCB family. As to quaternary structure, acetyl-CoA carboxylase is a heterohexamer composed of biotin carboxyl carrier protein (AccB), biotin carboxylase (AccC) and two subunits each of ACCase subunit alpha (AccA) and ACCase subunit beta (AccD).

It is found in the cytoplasm. The catalysed reaction is N(6)-carboxybiotinyl-L-lysyl-[protein] + acetyl-CoA = N(6)-biotinyl-L-lysyl-[protein] + malonyl-CoA. Its pathway is lipid metabolism; malonyl-CoA biosynthesis; malonyl-CoA from acetyl-CoA: step 1/1. Its function is as follows. Component of the acetyl coenzyme A carboxylase (ACC) complex. Biotin carboxylase (BC) catalyzes the carboxylation of biotin on its carrier protein (BCCP) and then the CO(2) group is transferred by the transcarboxylase to acetyl-CoA to form malonyl-CoA. The protein is Acetyl-coenzyme A carboxylase carboxyl transferase subunit beta of Bradyrhizobium sp. (strain ORS 278).